We begin with the raw amino-acid sequence, 118 residues long: Protein Rev (118 aa).

Residues Ser-5 and Ser-8 each carry the phosphoserine; by host CK2 modification. A homomultimerization region spans residues 18-28 (LIKFLYQSSSD). The segment at 23–52 (YQSSSDPPPNPGGTRQARRNRRRRWRERQR) is disordered. The short motif at 36–52 (TRQARRNRRRRWRERQR) is the Nuclear localization signal and RNA-binding (RRE) element. Residues 38 to 49 (QARRNRRRRWRE) are compositionally biased toward basic residues. Residues 75–86 (LQLPPLERLTLD) carry the Nuclear export signal and binding to XPO1 motif. A disordered region spans residues 92–118 (GTSGTQGVGSPQILVESPTVLESGTKE). 2 positions are modified to phosphoserine; by host: Ser-94 and Ser-101.

The protein belongs to the HIV-1 REV protein family. Homomultimer; when bound to the RRE. Multimeric assembly is essential for activity and may involve XPO1. Binds to human KPNB1, XPO1, TNPO1, RANBP5 and IPO7. Interacts with the viral Integrase. Interacts with human KHDRBS1. Interacts with human NAP1; this interaction decreases Rev multimerization and stimulates its activity. Interacts with human DEAD-box helicases DDX3 and DDX24; these interactions may serve for viral RNA export to the cytoplasm and packaging, respectively. Interacts with human PSIP1; this interaction may inhibit HIV-1 DNA integration by promoting dissociation of the Integrase-LEDGF/p75 complex. Post-translationally, asymmetrically arginine dimethylated at one site by host PRMT6. Methylation impairs the RNA-binding activity and export of viral RNA from the nucleus to the cytoplasm. In terms of processing, phosphorylated by protein kinase CK2. Presence of, and maybe binding to the N-terminus of the regulatory beta subunit of CK2 is necessary for CK2-mediated Rev's phosphorylation.

It localises to the host nucleus. It is found in the host nucleolus. The protein localises to the host cytoplasm. Its function is as follows. Escorts unspliced or incompletely spliced viral pre-mRNAs (late transcripts) out of the nucleus of infected cells. These pre-mRNAs carry a recognition sequence called Rev responsive element (RRE) located in the env gene, that is not present in fully spliced viral mRNAs (early transcripts). This function is essential since most viral proteins are translated from unspliced or partially spliced pre-mRNAs which cannot exit the nucleus by the pathway used by fully processed cellular mRNAs. Rev itself is translated from a fully spliced mRNA that readily exits the nucleus. Rev's nuclear localization signal (NLS) binds directly to KPNB1/Importin beta-1 without previous binding to KPNA1/Importin alpha-1. KPNB1 binds to the GDP bound form of RAN (Ran-GDP) and targets Rev to the nucleus. In the nucleus, the conversion from Ran-GDP to Ran-GTP dissociates Rev from KPNB1 and allows Rev's binding to the RRE in viral pre-mRNAs. Rev multimerization on the RRE via cooperative assembly exposes its nuclear export signal (NES) to the surface. Rev can then form a complex with XPO1/CRM1 and Ran-GTP, leading to nuclear export of the complex. Conversion from Ran-GTP to Ran-GDP mediates dissociation of the Rev/RRE/XPO1/RAN complex, so that Rev can return to the nucleus for a subsequent round of export. Beside KPNB1, also seems to interact with TNPO1/Transportin-1, RANBP5/IPO5 and IPO7/RANBP7 for nuclear import. The nucleoporin-like HRB/RIP is an essential cofactor that probably indirectly interacts with Rev to release HIV RNAs from the perinuclear region to the cytoplasm. The sequence is that of Protein Rev from Human immunodeficiency virus type 1 group M subtype B (isolate LW123) (HIV-1).